A 633-amino-acid polypeptide reads, in one-letter code: FAD-binding monooxygenase andJ (633 aa).

FAD contacts are provided by residues 117–120 (TWYW), 129–130 (DT), and Tyr135. NADP(+) is bound at residue 127-129 (MCD). NADP(+)-binding positions include 269–275 (TGASAVQ) and 292–293 (RT).

The protein belongs to the FAD-binding monooxygenase family. FAD serves as cofactor.

It participates in secondary metabolite biosynthesis; terpenoid biosynthesis. Functionally, FAD-binding monooxygenase; part of the gene cluster that mediates the biosynthesis of anditomin, a fungal meroterpenoid. The first step of the pathway is the synthesis of 3,5-dimethylorsellinic acid (DMOA) by the polyketide synthase andM. DMOA is then converted to the phthalide compound 5,7-dihydroxy-4,6-dimethylphthalide (DHDMP) by the cytochrome P450 monooxygenase andK, which is further prenylated by the prenyltransferase andD to yield farnesyl-DHDMP. Further epoxidation by the FAD-dependent monooxygenase andE leads to epoxyfarnesyl-DHDMP. The next step involves the terpene cyclase andB that converts epoxyfarnesyl-DHDMP into preandiloid A through opening of the epoxide ring followed by the cyclization of the farnesyl moiety. Preandiloid A is in turn oxidized at the C-3 hydroxyl group to yield preandiloid B by the dehydrogenase andC. The dioxygenase andA is solely responsible for the dehydrogenation of preandiloid B leading to the enone preandiloid C, as well as for the intriguing structural rearrangement to generate the bicyclo[2.2.2]octane core, transforming preandiloid C into andiconin. FAD-binding monooxygenase andJ then produces andilesin D which is reduced by dehydrogenase andI to yield andilesin A. Action of acetyltransferase andG followed by a spontaneous acetate elimination leads then to andilesin B, which is in turn substrate of the short chain dehydrogenase andH to yield andilesin C. Finally, the dioxygenase andF catalyzes the transformation of andilesin C to anditomin. The sequence is that of FAD-binding monooxygenase andJ from Emericella variicolor (Aspergillus stellatus).